A 245-amino-acid polypeptide reads, in one-letter code: Dehydrogenase/reductase SDR family member 6 (245 aa).

Residues Gln16–Ile18, Asp37, and Asp58 each bind NAD(+). Substrate is bound at residue Arg144. Tyr147 functions as the Proton acceptor in the catalytic mechanism. NAD(+) contacts are provided by residues Lys151 and Val180–Ser184. Substrate contacts are provided by Arg188 and Arg205.

It belongs to the short-chain dehydrogenases/reductases (SDR) family. In terms of assembly, homotetramer.

It is found in the cytoplasm. The catalysed reaction is cis-4-hydroxy-L-proline + NAD(+) = 4-oxo-L-proline + NADH + H(+). It catalyses the reaction (R)-3-hydroxybutanoate + NAD(+) = acetoacetate + NADH + H(+). It participates in amino-acid metabolism. The protein operates within siderophore biosynthesis. Its function is as follows. NAD(H)-dependent dehydrogenase/reductase with a preference for cyclic substrates. Catalyzes stereoselective conversion of 4-oxo-L-proline to cis-4-hydroxy-L-proline, likely a detoxification mechanism for ketoprolines. Mediates the formation of 2,5-dihydroxybenzoate (2,5-DHBA), a siderophore that chelates free cytoplasmic iron, thereby regulating iron transport and homeostasis while protecting cells against free radical-induced oxidative stress. The iron-siderophore complex is imported into mitochondria, providing an iron source for mitochondrial metabolic processes in particular heme synthesis. May act as a 3-hydroxybutyrate dehydrogenase. This chain is Dehydrogenase/reductase SDR family member 6 (bdh2), found in Xenopus laevis (African clawed frog).